A 169-amino-acid chain; its full sequence is Ribosome maturation factor RimM (169 aa).

Residues 94–168 (EEGQYYYHQI…KVIVELLEGL (75 aa)) form the PRC barrel domain.

It belongs to the RimM family. As to quaternary structure, binds ribosomal protein uS19.

It is found in the cytoplasm. In terms of biological role, an accessory protein needed during the final step in the assembly of 30S ribosomal subunit, possibly for assembly of the head region. Essential for efficient processing of 16S rRNA. May be needed both before and after RbfA during the maturation of 16S rRNA. It has affinity for free ribosomal 30S subunits but not for 70S ribosomes. In Limosilactobacillus fermentum (strain NBRC 3956 / LMG 18251) (Lactobacillus fermentum), this protein is Ribosome maturation factor RimM.